Reading from the N-terminus, the 534-residue chain is tRNA pseudouridine synthase 1 (534 aa).

Residues 1–32 (MGRGGKRTWYNGDRREAKRNRPNSIYNGEGRP) are disordered. Asp103 (nucleophile) is an active-site residue. Disordered stretches follow at residues 246–271 (LANS…DSDS) and 507–534 (QEVS…DLEG). A phosphoserine mark is found at Ser518, Ser519, and Ser525.

The protein belongs to the tRNA pseudouridine synthase TruA family. It depends on Zn(2+) as a cofactor.

The protein localises to the nucleus. It catalyses the reaction a uridine in tRNA = a pseudouridine in tRNA. The catalysed reaction is uridine in snRNA = pseudouridine in snRNA. The enzyme catalyses a uridine in mRNA = a pseudouridine in mRNA. Functionally, formation of pseudouridine at positions 27 and 28 in the anticodon stem and loop of transfer RNAs; at positions 34 and 36 of intron-containing precursor tRNA(Ile) and at position 35 in the intron-containing tRNA(Tyr). Catalyzes pseudouridylation at position 44 in U2 snRNA. Also catalyzes pseudouridylation of mRNAs. In Schizosaccharomyces pombe (strain 972 / ATCC 24843) (Fission yeast), this protein is tRNA pseudouridine synthase 1 (pus1).